Here is a 255-residue protein sequence, read N- to C-terminus: Hydroxyacylglutathione hydrolase (255 aa).

Zn(2+) contacts are provided by histidine 56, histidine 58, aspartate 60, histidine 61, histidine 114, aspartate 133, and histidine 171.

Belongs to the metallo-beta-lactamase superfamily. Glyoxalase II family. As to quaternary structure, monomer. Zn(2+) serves as cofactor.

It catalyses the reaction an S-(2-hydroxyacyl)glutathione + H2O = a 2-hydroxy carboxylate + glutathione + H(+). It participates in secondary metabolite metabolism; methylglyoxal degradation; (R)-lactate from methylglyoxal: step 2/2. Thiolesterase that catalyzes the hydrolysis of S-D-lactoyl-glutathione to form glutathione and D-lactic acid. The polypeptide is Hydroxyacylglutathione hydrolase (Rhodopseudomonas palustris (strain BisB18)).